A 122-amino-acid polypeptide reads, in one-letter code: Large ribosomal subunit protein uL18 (122 aa).

Belongs to the universal ribosomal protein uL18 family. Part of the 50S ribosomal subunit; part of the 5S rRNA/L5/L18/L25 subcomplex. Contacts the 5S and 23S rRNAs.

Its function is as follows. This is one of the proteins that bind and probably mediate the attachment of the 5S RNA into the large ribosomal subunit, where it forms part of the central protuberance. This Thermosipho melanesiensis (strain DSM 12029 / CIP 104789 / BI429) protein is Large ribosomal subunit protein uL18.